Consider the following 521-residue polypeptide: Signal recognition particle protein (521 aa).

GTP is bound by residues glycine 107–threonine 114, aspartate 196–arginine 200, and threonine 254–aspartate 257. The interval glycine 436 to proline 505 is disordered. Positions serine 447–arginine 462 are enriched in basic residues.

The protein belongs to the GTP-binding SRP family. SRP54 subfamily. Part of the signal recognition particle protein translocation system, which is composed of SRP and FtsY.

It localises to the cytoplasm. It carries out the reaction GTP + H2O = GDP + phosphate + H(+). Functionally, involved in targeting and insertion of nascent membrane proteins into the cytoplasmic membrane. Binds to the hydrophobic signal sequence of the ribosome-nascent chain (RNC) as it emerges from the ribosomes. The SRP-RNC complex is then targeted to the cytoplasmic membrane where it interacts with the SRP receptor FtsY. The protein is Signal recognition particle protein of Mycobacterium leprae (strain TN).